Here is a 312-residue protein sequence, read N- to C-terminus: Glyoxylate/hydroxypyruvate reductase A (312 aa).

Residue Arg227 is part of the active site. The active-site Proton donor is the His275.

Belongs to the D-isomer specific 2-hydroxyacid dehydrogenase family. GhrA subfamily.

It is found in the cytoplasm. The enzyme catalyses glycolate + NADP(+) = glyoxylate + NADPH + H(+). The catalysed reaction is (R)-glycerate + NAD(+) = 3-hydroxypyruvate + NADH + H(+). It carries out the reaction (R)-glycerate + NADP(+) = 3-hydroxypyruvate + NADPH + H(+). Catalyzes the NADPH-dependent reduction of glyoxylate and hydroxypyruvate into glycolate and glycerate, respectively. The protein is Glyoxylate/hydroxypyruvate reductase A of Citrobacter koseri (strain ATCC BAA-895 / CDC 4225-83 / SGSC4696).